A 212-amino-acid polypeptide reads, in one-letter code: Phosphatidylserine decarboxylase proenzyme (212 aa).

S182 serves as the catalytic Schiff-base intermediate with substrate; via pyruvic acid. The residue at position 182 (S182) is a Pyruvic acid (Ser); by autocatalysis.

The protein belongs to the phosphatidylserine decarboxylase family. PSD-A subfamily. As to quaternary structure, heterodimer of a large membrane-associated beta subunit and a small pyruvoyl-containing alpha subunit. Pyruvate serves as cofactor. Post-translationally, is synthesized initially as an inactive proenzyme. Formation of the active enzyme involves a self-maturation process in which the active site pyruvoyl group is generated from an internal serine residue via an autocatalytic post-translational modification. Two non-identical subunits are generated from the proenzyme in this reaction, and the pyruvate is formed at the N-terminus of the alpha chain, which is derived from the carboxyl end of the proenzyme. The post-translation cleavage follows an unusual pathway, termed non-hydrolytic serinolysis, in which the side chain hydroxyl group of the serine supplies its oxygen atom to form the C-terminus of the beta chain, while the remainder of the serine residue undergoes an oxidative deamination to produce ammonia and the pyruvoyl prosthetic group on the alpha chain.

It localises to the cell membrane. It catalyses the reaction a 1,2-diacyl-sn-glycero-3-phospho-L-serine + H(+) = a 1,2-diacyl-sn-glycero-3-phosphoethanolamine + CO2. The protein operates within phospholipid metabolism; phosphatidylethanolamine biosynthesis; phosphatidylethanolamine from CDP-diacylglycerol: step 2/2. Its function is as follows. Catalyzes the formation of phosphatidylethanolamine (PtdEtn) from phosphatidylserine (PtdSer). In Pelodictyon phaeoclathratiforme (strain DSM 5477 / BU-1), this protein is Phosphatidylserine decarboxylase proenzyme.